The primary structure comprises 128 residues: MSRDLNDLLTQSEETVQALIADGAETELLYEIEHHLASQDFTKLEKAAVELVKQGYHVDDADEFEDERGKRWFAFMAVTDAELDNDILNRQVREIAAIADECEVEYDGWGTLIEDEELDDEDLDDGEE.

It belongs to the RraB family. In terms of assembly, interacts with the C-terminal region of Rne.

The protein localises to the cytoplasm. Globally modulates RNA abundance by binding to RNase E (Rne) and regulating its endonucleolytic activity. Can modulate Rne action in a substrate-dependent manner by altering the composition of the degradosome. This chain is Regulator of ribonuclease activity B, found in Idiomarina loihiensis (strain ATCC BAA-735 / DSM 15497 / L2-TR).